The primary structure comprises 249 residues: Triosephosphate isomerase (249 aa).

Position 9-11 (9-11 (NWK)) interacts with substrate. His-91 (electrophile) is an active-site residue. The Proton acceptor role is filled by Glu-163. Residues Gly-169, Ser-209, and 230–231 (GG) contribute to the substrate site.

Belongs to the triosephosphate isomerase family. Homodimer.

It is found in the cytoplasm. The catalysed reaction is D-glyceraldehyde 3-phosphate = dihydroxyacetone phosphate. The protein operates within carbohydrate biosynthesis; gluconeogenesis. It participates in carbohydrate degradation; glycolysis; D-glyceraldehyde 3-phosphate from glycerone phosphate: step 1/1. In terms of biological role, involved in the gluconeogenesis. Catalyzes stereospecifically the conversion of dihydroxyacetone phosphate (DHAP) to D-glyceraldehyde-3-phosphate (G3P). This Halorhodospira halophila (strain DSM 244 / SL1) (Ectothiorhodospira halophila (strain DSM 244 / SL1)) protein is Triosephosphate isomerase.